Here is a 558-residue protein sequence, read N- to C-terminus: MAKNRRDRNSWGGFSEKTYEWSSEEEEPVKKAGPVQVLIVKDDHSFELDETALNRILLSEAVRDKEVVAVSVAGAFRKGKSFLMDFMLRYMYNQESVDWVGDYNEPLTGFSWRGGSERETTGIQIWSEIFLINKPDGKKVAVLLMDTQGTFDSQSTLRDSATVFALSTMISSIQVYNLSQNVQEDDLQHLQLFTEYGRLAMEETFLKPFQSLIFLVRDWSFPYEFSYGADGGAKFLEKRLKVSGNQHEELQNVRKHIHSCFTNISCFLLPHPGLKVATNPNFDGKLKEIDDEFIKNLKILIPWLLSPESLDIKEINGNKITCRGLVEYFKAYIKIYQGEELPHPKSMLQATAEANNLAAVATAKDTYNKKMEEICGGDKPFLAPNDLQTKHLQLKEESVKLFRGVKKMGGEEFSRRYLQQLESEIDELYIQYIKHNDSKNIFHAARTPATLFVVIFITYVIAGVTGFIGLDIIASLCNMIMGLTLITLCTWAYIRYSGEYRELGAVIDQVAAALWDQGSTNEALYKLYSAAATHRHLYHQAFPTPKSESTEQSEKKKM.

The disordered stretch occupies residues 1 to 27; it reads MAKNRRDRNSWGGFSEKTYEWSSEEEE. The interval 1-34 is N-terminal hypervariable region (HVR); that stretch reads MAKNRRDRNSWGGFSEKTYEWSSEEEEPVKKAGP. Topologically, residues 1-449 are cytoplasmic; the sequence is MAKNRRDRNS…NIFHAARTPA (449 aa). Residues Ser-10, Ser-22, and Ser-23 each carry the phosphoserine modification. The 246-residue stretch at 64-309 folds into the GB1/RHD3-type G domain; it reads DKEVVAVSVA…LIPWLLSPES (246 aa). GDP is bound by residues Arg-77, Lys-78, Gly-79, Lys-80, Ser-81, Phe-82, Gln-148, Arg-217, Asp-218, Val-276, and Asn-279. Residues Arg-77, Lys-78, Gly-79, Lys-80, Ser-81, and Phe-82 each contribute to the GTP site. Ser-81 lines the Mg(2+) pocket. 3 residues coordinate GTP: Arg-217, Asp-218, and Val-276. Residues 347-438 form a 3HB (three-helix bundle) domain region; sequence MLQATAEANN…YIQYIKHNDS (92 aa). Lys-395 carries the post-translational modification N6-acetyllysine. A coiled-coil region spans residues 412–439; that stretch reads EFSRRYLQQLESEIDELYIQYIKHNDSK. The interval 439–447 is linker; sequence KNIFHAART. A helical membrane pass occupies residues 450-470; it reads TLFVVIFITYVIAGVTGFIGL. A topological domain (lumenal) is located at residue Asp-471. A helical transmembrane segment spans residues 472-492; the sequence is IIASLCNMIMGLTLITLCTWA. Topologically, residues 493–558 are cytoplasmic; it reads YIRYSGEYRE…STEQSEKKKM (66 aa). The interval 521 to 558 is autoinhibitory domain; it reads NEALYKLYSAAATHRHLYHQAFPTPKSESTEQSEKKKM.

It belongs to the TRAFAC class dynamin-like GTPase superfamily. GB1/RHD3 GTPase family. GB1 subfamily. Monomeric and homodimeric. The homodimer, transiently formed by two molecules on opposing membranes, is the active form mediating ER membrane fusion. Interacts with REEP1, REEP5, RTN3 and RTN4 (via the transmembrane region); these proteins are involved in endoplasmic reticulum tubular network organization. Interacts with ZFYVE27; both proteins are involved in endoplasmic reticulum tubular network organization. Interacts with ARL6IP1; both proteins are involved in endoplasmic reticulum tubular network organization. Interacts with SPAST; the interaction is direct, could recruit SPAST to Golgi membranes. Interacts (via N-terminal region) with MAP4K4 (via CNH regulatory domain). May interact with TMED2. Interacts with CPT1C. Post-translationally, phosphorylated. Phosphorylation, by different kinases, of the N-terminal hypervariable region (HVR) regulates the ATL1-mediated membrane tethering step.

The protein localises to the endoplasmic reticulum membrane. The protein resides in the golgi apparatus membrane. Its subcellular location is the cell projection. It localises to the axon. The catalysed reaction is GTP + H2O = GDP + phosphate + H(+). In terms of biological role, atlastin-1 (ATL1) is a membrane-anchored GTPase that mediates the GTP-dependent fusion of endoplasmic reticulum (ER) membranes, maintaining the continuous ER network. It facilitates the formation of three-way junctions where ER tubules intersect. Two atlastin-1 on neighboring ER tubules bind GTP and form loose homodimers through the GB1/RHD3-type G domains and 3HB regions. Upon GTP hydrolysis, the 3HB regions tighten, pulling the membranes together to drive their fusion. After fusion, the homodimer disassembles upon release of inorganic phosphate (Pi). Subsequently, GDP dissociates, resetting the monomers to a conformation ready for a new fusion cycle. May also regulate more or less directly Golgi biogenesis. Indirectly regulates axonal development. In Pongo abelii (Sumatran orangutan), this protein is Atlastin-1.